The following is a 225-amino-acid chain: NAD(P)H-hydrate epimerase (225 aa).

The region spanning methionine 9–phenylalanine 209 is the YjeF N-terminal domain. Asparagine 57 to aspartate 61 contacts (6S)-NADPHX. 2 residues coordinate K(+): asparagine 58 and aspartate 119. Residues glycine 123–leucine 129 and aspartate 152 each bind (6S)-NADPHX. Residue threonine 155 participates in K(+) binding.

It belongs to the NnrE/AIBP family. Requires K(+) as cofactor.

The catalysed reaction is (6R)-NADHX = (6S)-NADHX. The enzyme catalyses (6R)-NADPHX = (6S)-NADPHX. Its function is as follows. Catalyzes the epimerization of the S- and R-forms of NAD(P)HX, a damaged form of NAD(P)H that is a result of enzymatic or heat-dependent hydration. This is a prerequisite for the S-specific NAD(P)H-hydrate dehydratase to allow the repair of both epimers of NAD(P)HX. The chain is NAD(P)H-hydrate epimerase from Leuconostoc sp. (strain C2).